The primary structure comprises 487 residues: MTIKGGVVSQDFSAAFSTVACEPAGVVWNKVCTVLKRELGDAAFGSWIAPAVLREGPSGDVVVVTPTGIARDWIRRSAWRRVSELWTANDATGRRLDLKSRLEFESVGGAGYEAKAEPIEIVLPVSSDVPALAPTNGSKPSPVQGLQERFTFDTFVPGPANEFAHAVARRVASWADGHFNPVLFHGPYGFGKTHLLNALAWEAMRQAPTKRVVYLTAERFLSTFVRAVMDRQTAAFKEELRGADLLIIDDVHFIAGKQSSQEELFHTLTALVEDGRRVVFSSDRAPAAMTEMDARLRSHLSAGLVCGLEPADRALRIGILERKLQALSRQHGFEPTLRAEVLNFLADRFTDSVRELEGALNTLSARAGEGVSRLTLEEVQAILRPHLRAGEKRITIDDIQKATSEHYGMKQVDLLSERRNRAIARPRQAAMWLAKQLTTRSLPDIGRRFGGRDHTTVLHAVRRIEALRADDPVLSQDLETITRKLRG.

The domain I, interacts with DnaA modulators stretch occupies residues 1–92 (MTIKGGVVSQ…SELWTANDAT (92 aa)). The tract at residues 92–144 (TGRRLDLKSRLEFESVGGAGYEAKAEPIEIVLPVSSDVPALAPTNGSKPSPVQ) is domain II. Residues 145 to 367 (GLQERFTFDT…GALNTLSARA (223 aa)) are domain III, AAA+ region. Residues Gly189, Gly191, Lys192, and Thr193 each coordinate ATP. The segment at 368–487 (GEGVSRLTLE…LETITRKLRG (120 aa)) is domain IV, binds dsDNA.

It belongs to the DnaA family. As to quaternary structure, oligomerizes as a right-handed, spiral filament on DNA at oriC.

The protein localises to the cytoplasm. In terms of biological role, plays an essential role in the initiation and regulation of chromosomal replication. ATP-DnaA binds to the origin of replication (oriC) to initiate formation of the DNA replication initiation complex once per cell cycle. Binds the DnaA box (a 9 base pair repeat at the origin) and separates the double-stranded (ds)DNA. Forms a right-handed helical filament on oriC DNA; dsDNA binds to the exterior of the filament while single-stranded (ss)DNA is stabiized in the filament's interior. The ATP-DnaA-oriC complex binds and stabilizes one strand of the AT-rich DNA unwinding element (DUE), permitting loading of DNA polymerase. After initiation quickly degrades to an ADP-DnaA complex that is not apt for DNA replication. Binds acidic phospholipids. In Caulobacter sp. (strain K31), this protein is Chromosomal replication initiator protein DnaA.